Reading from the N-terminus, the 129-residue chain is Cocaine- and amphetamine-regulated transcript protein (129 aa).

The signal sequence occupies residues 1-27 (MESSRLRLLPLLGAALLLLLPLLGARA). Position 41 is a phosphotyrosine (Tyr-41). Residue Ser-48 is modified to Phosphoserine. Disulfide bonds link Cys-95–Cys-113, Cys-101–Cys-121, and Cys-115–Cys-128.

This sequence belongs to the CART family.

Its subcellular location is the secreted. In terms of biological role, satiety factor closely associated with the actions of leptin and neuropeptide y; this anorectic peptide inhibits both normal and starvation-induced feeding and completely blocks the feeding response induced by neuropeptide Y and regulated by leptin in the hypothalamus. The sequence is that of Cocaine- and amphetamine-regulated transcript protein (Cartpt) from Mus musculus (Mouse).